The sequence spans 444 residues: Xaa-Pro dipeptidase (444 aa).

Mn(2+) contacts are provided by Asp247, Asp258, His340, Glu385, and Glu424.

It belongs to the peptidase M24B family. Bacterial-type prolidase subfamily. Mn(2+) serves as cofactor.

It carries out the reaction Xaa-L-Pro dipeptide + H2O = an L-alpha-amino acid + L-proline. In terms of biological role, splits dipeptides with a prolyl residue in the C-terminal position. The chain is Xaa-Pro dipeptidase from Photorhabdus laumondii subsp. laumondii (strain DSM 15139 / CIP 105565 / TT01) (Photorhabdus luminescens subsp. laumondii).